Consider the following 25-residue polypeptide: FNAGGHINHSLFWQNLAPASSNEAK.

His-9 serves as a coordination point for Mn(2+).

Belongs to the iron/manganese superoxide dismutase family. As to quaternary structure, homotetramer. The cofactor is Mn(2+).

The protein resides in the mitochondrion matrix. The enzyme catalyses 2 superoxide + 2 H(+) = H2O2 + O2. Functionally, destroys superoxide anion radicals which are normally produced within the cells and which are toxic to biological systems. The polypeptide is Superoxide dismutase [Mn], mitochondrial (Alternaria alternata (Alternaria rot fungus)).